The following is a 246-amino-acid chain: 4-hydroxy-tetrahydrodipicolinate reductase (246 aa).

7-12 (GCSGRM) provides a ligand contact to NAD(+). Arg34 is an NADP(+) binding site. NAD(+) is bound by residues 76–78 (ATT) and 102–105 (CPNT). Residue His135 is the Proton donor/acceptor of the active site. Residue His136 participates in (S)-2,3,4,5-tetrahydrodipicolinate binding. The active-site Proton donor is the Lys139. A (S)-2,3,4,5-tetrahydrodipicolinate-binding site is contributed by 145 to 146 (GT).

The protein belongs to the DapB family.

Its subcellular location is the cytoplasm. The enzyme catalyses (S)-2,3,4,5-tetrahydrodipicolinate + NAD(+) + H2O = (2S,4S)-4-hydroxy-2,3,4,5-tetrahydrodipicolinate + NADH + H(+). The catalysed reaction is (S)-2,3,4,5-tetrahydrodipicolinate + NADP(+) + H2O = (2S,4S)-4-hydroxy-2,3,4,5-tetrahydrodipicolinate + NADPH + H(+). Its pathway is amino-acid biosynthesis; L-lysine biosynthesis via DAP pathway; (S)-tetrahydrodipicolinate from L-aspartate: step 4/4. Functionally, catalyzes the conversion of 4-hydroxy-tetrahydrodipicolinate (HTPA) to tetrahydrodipicolinate. The sequence is that of 4-hydroxy-tetrahydrodipicolinate reductase from Chlamydia caviae (strain ATCC VR-813 / DSM 19441 / 03DC25 / GPIC) (Chlamydophila caviae).